Consider the following 1856-residue polypeptide: DNA-directed RNA polymerase II subunit RPB1 (1856 aa).

Zn(2+) contacts are provided by Cys66, Cys69, Cys76, His79, Cys106, Cys109, Cys149, and Cys177. Residues 256-268 (PAVVTFGSAKNQD) form a lid loop region. Residues 314–331 (NCIPGLPTATQKGGRPLK) form a rudder loop region. Mg(2+)-binding residues include Asp489, Asp491, and Asp493. The segment at 827 to 839 (PSEFFFHAMGGRE) is bridging helix. Lys1260 participates in a covalent cross-link: Glycyl lysine isopeptide (Lys-Gly) (interchain with G-Cter in ubiquitin). Residues 1523 to 1856 (PTTGGMSPGA…PSSPTYDPNS (334 aa)) form a disordered region. Low complexity predominate over residues 1587-1856 (SMTSPHYSPT…PSSPTYDPNS (270 aa)). 27 tandem repeats follow at residues 1593-1599 (YSPTSPS), 1600-1606 (YSPTSPA), 1616-1622 (YSPTSPS), 1623-1629 (YSPTSPS), 1630-1636 (YSPTSPS), 1637-1643 (YSPTSPS), 1644-1650 (YSPTSPS), 1651-1657 (YSPTSPS), 1658-1664 (YSPSSPS), 1665-1671 (YSPSSPS), 1672-1678 (YSPSSPR), 1679-1685 (YSPTSPT), 1686-1692 (YSPTSPT), 1693-1699 (YSPTSPT), 1700-1706 (YSPTSPT), 1707-1713 (YSPTSPS), 1720-1726 (YSPSSPK), 1727-1733 (YSPSSPT), 1734-1740 (YSPTSPS), 1741-1747 (YSPTSPQ), 1748-1754 (YSPTSPQ), 1755-1761 (YSPSSPT), 1769-1775 (YNPTSPR), 1782-1788 (YSPTSPT), 1789-1795 (YSPTSPS), 1796-1802 (YTPSSPQ), and 1803-1809 (YSPTSPT). Residues 1593-1816 (YSPTSPSYSP…SPTYTPSPSE (224 aa)) are C-terminal domain (CTD); 28 X 7 AA approximate tandem repeats of Y-[ST]-P-[ST]-S-P-[AGKNQRST]. Residues 1810 to 1816 (YTPSPSE) form a 28; approximate repeat.

This sequence belongs to the RNA polymerase beta' chain family. As to quaternary structure, component of the RNA polymerase II (Pol II) complex consisting of 12 subunits. Interacts with sig-7. The tandem 7 residues repeats in the C-terminal domain (CTD) can be highly phosphorylated. The phosphorylation activates Pol II. Phosphorylation occurs mainly at residues 'Ser-2' and 'Ser-5' of the heptapeptide repeat and starts at the 3- to 4-cell embryonic stage. This phosphorylation also occurs in the early stages of oocyte development and is not detected in oocytes arrested at the meiotic diakinesis stage. In the somatic lineage, phosphorylation at 'Ser-2' is mediated by cdk-12 downstream of cdk-9 whereas in the germline lineage cdk-12 phosphorylates 'Ser-2' independently of cdk-9. Phosphorylation is likely mediated by cdk-7. May be dephosphorylated by fcp-1 in diakinetic oocytes and in 1-cell and 2-cell embryos. Dephosphorylated at 'Ser-5' of the heptapeptide repeats by ssup-72. The phosphorylation state is believed to result from the balanced action of site-specific CTD kinases and phosphatase, and a 'CTD code' that specifies the position of Pol II within the transcription cycle has been proposed. Post-translationally, following transcription stress, the elongating form of RNA polymerase II (RNA pol IIo) is polyubiquitinated via 'Lys-63'-linkages on Lys-1260 at DNA damage sites without leading to degradation: ubiquitination promotes RNA pol IIo backtracking to allow access by the transcription-coupled nucleotide excision repair (TC-NER) machinery. Subsequent DEF1-dependent polyubiquitination by the elongin complex via 'Lys-48'-linkages may lead to proteasome-mediated degradation; presumably at stalled RNA pol II where TC-NER has failed, to halt global transcription and enable 'last resort' DNA repair pathways.

It is found in the nucleus. Its subcellular location is the chromosome. It catalyses the reaction RNA(n) + a ribonucleoside 5'-triphosphate = RNA(n+1) + diphosphate. Its function is as follows. DNA-dependent RNA polymerase catalyzes the transcription of DNA into RNA using the four ribonucleoside triphosphates as substrates. Largest and catalytic component of RNA polymerase II which synthesizes mRNA precursors and many functional non-coding RNAs. Forms the polymerase active center together with the second largest subunit. Pol II is the central component of the basal RNA polymerase II transcription machinery. It is composed of mobile elements that move relative to each other. RPB1 is part of the core element with the central large cleft, the clamp element that moves to open and close the cleft and the jaws that are thought to grab the incoming DNA template. At the start of transcription, a single-stranded DNA template strand of the promoter is positioned within the central active site cleft of Pol II. A bridging helix emanates from RPB1 and crosses the cleft near the catalytic site and is thought to promote translocation of Pol II by acting as a ratchet that moves the RNA-DNA hybrid through the active site by switching from straight to bent conformations at each step of nucleotide addition. During transcription elongation, Pol II moves on the template as the transcript elongates. Elongation is influenced by the phosphorylation status of the C-terminal domain (CTD) of Pol II largest subunit (RPB1), which serves as a platform for assembly of factors that regulate transcription initiation, elongation, termination and mRNA processing. Involved in the transcription of several genes including those involved in embryogenesis. This is DNA-directed RNA polymerase II subunit RPB1 from Caenorhabditis elegans.